Reading from the N-terminus, the 594-residue chain is Potassium-transporting ATPase potassium-binding subunit (594 aa).

10 consecutive transmembrane segments (helical) span residues 3 to 23 (ADFLGLLLLYLTILLCAAPLL), 67 to 87 (AVAMLVFNVLGVLAVYALQRL), 136 to 156 (ALTVQNFVSAATGIAVLIALV), 179 to 199 (LYVLLPLSFILALALVSQGVV), 287 to 307 (LEMLAILLIPAALCWTFGEMV), 314 to 334 (VAILAAMTVLFAGFAASAAYF), 415 to 435 (GLYGMLAFAILAVFIAGLMIG), 453 to 473 (VALVILATPALVLAGTAVAVL), 519 to 539 (VLLGLAMWFGRYTIIVAILAL), and 562 to 582 (LFVALLVGAVLLVGALTYVPA).

The protein belongs to the KdpA family. As to quaternary structure, the system is composed of three essential subunits: KdpA, KdpB and KdpC.

The protein localises to the cell inner membrane. Functionally, part of the high-affinity ATP-driven potassium transport (or Kdp) system, which catalyzes the hydrolysis of ATP coupled with the electrogenic transport of potassium into the cytoplasm. This subunit binds the periplasmic potassium ions and delivers the ions to the membrane domain of KdpB through an intramembrane tunnel. This is Potassium-transporting ATPase potassium-binding subunit from Bordetella parapertussis (strain 12822 / ATCC BAA-587 / NCTC 13253).